We begin with the raw amino-acid sequence, 204 residues long: Somatotropin (204 aa).

Residues 1-17 form the signal peptide; the sequence is MDRAILLLSVLSVGVSS. Gln-18 is subject to Pyrrolidone carboxylic acid. Position 35 (His-35) interacts with Zn(2+). Residues Cys-69 and Cys-177 are joined by a disulfide bond. Glu-186 lines the Zn(2+) pocket. Residues Cys-194 and Cys-202 are joined by a disulfide bond.

It belongs to the somatotropin/prolactin family.

Its subcellular location is the secreted. In terms of biological role, growth hormone plays an important role in growth control and is involved in the regulation of several anabolic processes. Implicated as an osmoregulatory substance important for seawater adaptation. This is Somatotropin (gh) from Dicentrarchus labrax (European seabass).